The sequence spans 157 residues: Urease accessory protein UreE (157 aa).

Belongs to the UreE family.

Its subcellular location is the cytoplasm. Functionally, involved in urease metallocenter assembly. Binds nickel. Probably functions as a nickel donor during metallocenter assembly. In Corynebacterium glutamicum (strain ATCC 13032 / DSM 20300 / JCM 1318 / BCRC 11384 / CCUG 27702 / LMG 3730 / NBRC 12168 / NCIMB 10025 / NRRL B-2784 / 534), this protein is Urease accessory protein UreE.